A 239-amino-acid chain; its full sequence is Ribosomal RNA small subunit methyltransferase G (239 aa).

Residues Gly-78, Phe-83, 129 to 130 (AE), and Arg-148 each bind S-adenosyl-L-methionine.

The protein belongs to the methyltransferase superfamily. RNA methyltransferase RsmG family.

The protein localises to the cytoplasm. Functionally, specifically methylates the N7 position of a guanine in 16S rRNA. The chain is Ribosomal RNA small subunit methyltransferase G from Clostridium botulinum (strain 657 / Type Ba4).